The sequence spans 395 residues: S-adenosylmethionine synthase (395 aa).

Histidine 16 contacts ATP. Aspartate 18 contributes to the Mg(2+) binding site. Glutamate 44 is a K(+) binding site. Residues glutamate 57 and glutamine 100 each coordinate L-methionine. The segment at 100 to 110 (QSPDIAQGVDR) is flexible loop. Residues 167–169 (DAK), 233–234 (RF), aspartate 242, 248–249 (RK), alanine 265, and lysine 269 each bind ATP. L-methionine is bound at residue aspartate 242. Lysine 273 serves as a coordination point for L-methionine.

The protein belongs to the AdoMet synthase family. In terms of assembly, homotetramer; dimer of dimers. Requires Mg(2+) as cofactor. K(+) serves as cofactor.

The protein localises to the cytoplasm. It catalyses the reaction L-methionine + ATP + H2O = S-adenosyl-L-methionine + phosphate + diphosphate. It functions in the pathway amino-acid biosynthesis; S-adenosyl-L-methionine biosynthesis; S-adenosyl-L-methionine from L-methionine: step 1/1. In terms of biological role, catalyzes the formation of S-adenosylmethionine (AdoMet) from methionine and ATP. The overall synthetic reaction is composed of two sequential steps, AdoMet formation and the subsequent tripolyphosphate hydrolysis which occurs prior to release of AdoMet from the enzyme. This Burkholderia cenocepacia (strain ATCC BAA-245 / DSM 16553 / LMG 16656 / NCTC 13227 / J2315 / CF5610) (Burkholderia cepacia (strain J2315)) protein is S-adenosylmethionine synthase.